The chain runs to 1050 residues: Self-sufficient cytochrome P450 monooxygenase CYP505E5 (1050 aa).

Cys405 lines the heme pocket. The interval 467–491 is disordered; that stretch reads RRSMLVARDGSSGESSNHLAEARGD. Residues 500-641 form the Flavodoxin-like domain; it reads VSFFYGSNSG…DLEAWEETSL (142 aa). FMN-binding positions include 506-510 and 585-617; these read SNSGT and VFGC…TRLA. Positions 679-907 constitute an FAD-binding FR-type domain; the sequence is KGLIEAKVTA…RPAKESFHLP (229 aa).

In the N-terminal section; belongs to the cytochrome P450 family. FAD is required as a cofactor. It depends on FMN as a cofactor. Requires heme as cofactor.

It catalyses the reaction 2 oxidized [cytochrome P450] + NADPH = 2 reduced [cytochrome P450] + NADP(+) + H(+). It carries out the reaction an organic molecule + reduced [NADPH--hemoprotein reductase] + O2 = an alcohol + oxidized [NADPH--hemoprotein reductase] + H2O + H(+). The catalysed reaction is dodecanoate + reduced [NADPH--hemoprotein reductase] + O2 = 5-hydroxydodecanoate + oxidized [NADPH--hemoprotein reductase] + H2O + H(+). The enzyme catalyses tetradecanoate + reduced [NADPH--hemoprotein reductase] + O2 = 7-hydroxytetradecanoate + oxidized [NADPH--hemoprotein reductase] + H2O + H(+). It catalyses the reaction dodecan-1-ol + reduced [NADPH--hemoprotein reductase] + O2 = 1,5-dodecanediol + oxidized [NADPH--hemoprotein reductase] + H2O + H(+). It carries out the reaction dodecan-1-ol + reduced [NADPH--hemoprotein reductase] + O2 = 1,4-dodecanediol + oxidized [NADPH--hemoprotein reductase] + H2O + H(+). The catalysed reaction is dodecan-1-ol + reduced [NADPH--hemoprotein reductase] + O2 = 1,6-dodecanediol + oxidized [NADPH--hemoprotein reductase] + H2O + H(+). Its function is as follows. Self-sufficient cytochrome P450 monooxygenase that catalyzes the regioselective in-chain hydroxylation of alkanes, fatty alcohols, and fatty acids at the omega-7 position. Performs hydroxylation of C10-C16 n-alkanes and C12 and C14 fatty alcohols; and thereby enables the one step biocatalytic synthesis of rare alcohols such as 5-dodecanol and 7-tetradecanol. Converts 1-dodecanol into 1,5-dodecanediol as major product with very little sub-terminally hydroxylated products with the 1,4-dodecanediol and 1,6-dodecanediol more abundant. Converts dodecanoic acid to 5-hydroxydodecanoic acid which can be further converted into delta-dodecalactone by lactonization of the 5-hydroxy acid at low pH. Also gives sub-terminal hydroxylation of dodecanoic acid with 9-hydroxydodecanoic acid being the second most abundant product. In Aspergillus niger, this protein is Self-sufficient cytochrome P450 monooxygenase CYP505E5.